The following is a 1020-amino-acid chain: C protein alpha-antigen (1020 aa).

Positions 1 to 41 (MFRRSKNNSYDTSQTKQRFSIKKFKFGAASVLIGLSFLGGV) are cleaved as a signal peptide. A 9 X 82 AA tandem repeats region spans residues 227–964 (VPDKDKYDPT…EVTVHVTPKP (738 aa)). Disordered regions lie at residues 261 to 281 (DGSK…VPGD), 306 to 330 (PKPV…GTPV), 342 to 363 (PDGS…VPGD), 388 to 445 (PKPV…VPGD), 470 to 494 (PKPV…GTPV), 506 to 527 (PDGS…VPGD), 552 to 576 (PKPV…GTPV), 588 to 610 (PDGS…PGDH), 634 to 658 (PKPV…GTPV), 670 to 692 (PDGS…PGDH), 716 to 740 (PKPV…GTPV), 752 to 774 (PDGS…PGDH), 798 to 822 (PKPV…GTPV), 834 to 856 (PDGS…PGDH), 880 to 904 (PKPV…GTPV), and 962 to 989 (PKPV…KLPA). The segment covering 272 to 281 (DRPDTNVPGD) has biased composition (basic and acidic residues). Positions 320–329 (GETTVPQGTP) are enriched in polar residues. Basic and acidic residues predominate over residues 354-363 (DRPDTNVPGD). The segment covering 402–411 (GETTVPQGTP) has biased composition (polar residues). Over residues 436 to 445 (DRPDTNVPGD) the composition is skewed to basic and acidic residues. Residues 484-493 (GETTVPQGTP) show a composition bias toward polar residues. Positions 518 to 527 (DRPDTNVPGD) are enriched in basic and acidic residues. Over residues 566–575 (GETTVPQGTP) the composition is skewed to polar residues. Positions 600 to 610 (DRPDTNVPGDH) are enriched in basic and acidic residues. Residues 648-657 (GETTVPQGTP) show a composition bias toward polar residues. Positions 682-692 (DRPDTNVPGDH) are enriched in basic and acidic residues. The segment covering 730 to 739 (GETTVPQGTP) has biased composition (polar residues). Over residues 764 to 774 (DRPDTNVPGDH) the composition is skewed to basic and acidic residues. Over residues 812 to 821 (GETTVPQGTP) the composition is skewed to polar residues. Over residues 846 to 856 (DRPDTNVPGDH) the composition is skewed to basic and acidic residues. A compositionally biased stretch (polar residues) spans 894 to 903 (GETTVPQGTP). The short motif at 987–991 (LPATG) is the LPXTG sorting signal element. Pentaglycyl murein peptidoglycan amidated threonine is present on Thr-990. A propeptide spans 991–1020 (GENATPFFNVAALTIISSVGLLSVSKKKED) (removed by sortase).

The protein localises to the secreted. It localises to the cell wall. In terms of biological role, may play a role in both virulence and immunity. This is C protein alpha-antigen (bca) from Streptococcus agalactiae serotype Ia (strain ATCC 27591 / A909 / CDC SS700).